A 73-amino-acid polypeptide reads, in one-letter code: MAKKQGAIEIEGTVVESLPNAMFKVELQNGHQVLAHISGKMRMHYIRILPDDRVVVELSPYDLTRGRIVYRYK.

Residues 1 to 73 (MAKKQGAIEI…TRGRIVYRYK (73 aa)) enclose the S1-like domain.

This sequence belongs to the IF-1 family. As to quaternary structure, component of the 30S ribosomal translation pre-initiation complex which assembles on the 30S ribosome in the order IF-2 and IF-3, IF-1 and N-formylmethionyl-tRNA(fMet); mRNA recruitment can occur at any time during PIC assembly.

It localises to the cytoplasm. Functionally, one of the essential components for the initiation of protein synthesis. Stabilizes the binding of IF-2 and IF-3 on the 30S subunit to which N-formylmethionyl-tRNA(fMet) subsequently binds. Helps modulate mRNA selection, yielding the 30S pre-initiation complex (PIC). Upon addition of the 50S ribosomal subunit IF-1, IF-2 and IF-3 are released leaving the mature 70S translation initiation complex. The sequence is that of Translation initiation factor IF-1 from Streptomyces coelicolor (strain ATCC BAA-471 / A3(2) / M145).